The sequence spans 578 residues: MRNEEAEKLFWIFNNKVRPINYSEIVENTTPRKSSINREKIESENNGQVYNELFFFKLLLNEDLSKFLISLINTNLRHEREKKLDKGKDISRLNDLTDITFWKFITDYLKNIYSNKNNDKIPPELINLKMMDHNRYSAVHNVLDMKSHRFEEYCEIFMNSALKYINIGNVLNCDETIYAYYGKDAIKDHILINNDSKPHSVGIEAYSLTTKLNISNCPYVISYGPRTPENCQSPFNSLKTLLDNLHSKYNWEDPRNNLIVCCDSAFALVNNKECLDELKCRILSSTRKSGVTVPQEIKIFVKPLLTIHKTFLFYDESTGLLYEYTKNTAGHINCIATNLYSRYSNPYVEINNNLNIEQFATIGNLFRFSKKELELIFVGETLHGTTLEILNGKYKTNFVKPPCGPFWNEQMLKKLSAEHIAQIYNDKYKKENNNLNKNDKIKKILEPLDSTQDGGIYDKNKNYSKKELQDLKIKVIGTHQNRSQMIHDQYIFWYNLVDITDKRYYATIRGSSSHSYTKLFILGGLFDLILNSYSLHREYHEMELECKNPENQPPEIIQTINKFVESLIFQFHELKELQ.

Its function is as follows. Involved in regulation of group size of aggregation streams. The chain is Suppressor of smlA (sslA1) from Dictyostelium discoideum (Social amoeba).